The following is a 468-amino-acid chain: MKKTKDIGICAIDIYFPQTYVNQSELKKYDKVSNGKYTIGLGQTNMSFVGDREDIVSMAMTSVKMMMSKYSIDYQSIGRLEVGTETIIDKSKSVKSSIMSLFQEYGNTSLEGVDTLNACYGGTNALFNSLQWIESSYWDGRYALVVTGDIAVYSKGAARPTGGAGVVTMLIGPNATLIFDQSLRGTHMENVNDFYKPDLSSEYPYVDGKLSIECYLRALDKCYLEYKKKFESINDDNKFSMDSFDYVCFHSPYNRLVQKSYARLIYNDFLQNPNNPKYQDLLPFKDLSTGKDSYINSKLDQITLKLSLDDFKTKVNPSTLLSKECGNSYCGSVYSGILSLLSNVNDLNNKKVLVFSYGSGLAASLFSFRINNNKNRNNNNNNNNCFFKTTNDIGKISNIKERLSNRVKVSPEEFTRILDIREKSHQMVGARTPIDTLDYISAGTFYLEKIDEKLIRHYKSKPIISSKL.

Glutamate 85 (proton donor/acceptor) is an active-site residue. Catalysis depends on cysteine 119, which acts as the Acyl-thioester intermediate. (3S)-3-hydroxy-3-methylglutaryl-CoA contacts are provided by cysteine 119, threonine 161, serine 211, histidine 250, lysine 259, asparagine 327, and serine 359. The Proton donor/acceptor role is filled by histidine 250.

Belongs to the thiolase-like superfamily. HMG-CoA synthase family.

It catalyses the reaction acetoacetyl-CoA + acetyl-CoA + H2O = (3S)-3-hydroxy-3-methylglutaryl-CoA + CoA + H(+). It participates in metabolic intermediate biosynthesis; (R)-mevalonate biosynthesis; (R)-mevalonate from acetyl-CoA: step 2/3. Condenses acetyl-CoA with acetoacetyl-CoA to form HMG-CoA, which is the substrate for HMG-CoA reductase. This is Hydroxymethylglutaryl-CoA synthase B (hgsB) from Dictyostelium discoideum (Social amoeba).